A 188-amino-acid polypeptide reads, in one-letter code: MKQQANLIRAGQVIEHDGRRWTVLKQQIITPGKGGAFIQVEMRDLKTGNKTNERWRTADTVERLLTEEKEYTYSYMDGDNIVLMDPETFEQTLLPLDLLGDQAPFLQDNMVLVVNLVEGDPVGVTLPAQVTLEIIEADPVVKGQTASSSYKPAKLSNGVKTMVPPFIEAGERIVVRTEDASYVERAKG.

This sequence belongs to the elongation factor P family.

The protein resides in the cytoplasm. It participates in protein biosynthesis; polypeptide chain elongation. Involved in peptide bond synthesis. Stimulates efficient translation and peptide-bond synthesis on native or reconstituted 70S ribosomes in vitro. Probably functions indirectly by altering the affinity of the ribosome for aminoacyl-tRNA, thus increasing their reactivity as acceptors for peptidyl transferase. This is Elongation factor P from Gluconacetobacter diazotrophicus (strain ATCC 49037 / DSM 5601 / CCUG 37298 / CIP 103539 / LMG 7603 / PAl5).